The following is a 198-amino-acid chain: Na(+)-translocating NADH-quinone reductase subunit E (198 aa).

The next 6 membrane-spanning stretches (helical) occupy residues 11–31 (SIFI…FLAV), 39–59 (FGLG…NNLV), 77–97 (FLNF…LEMV), 110–130 (GIFL…SFMV), 140–160 (IVYG…LAGI), and 176–196 (LGIT…FSGV).

Belongs to the NqrDE/RnfAE family. In terms of assembly, composed of six subunits; NqrA, NqrB, NqrC, NqrD, NqrE and NqrF. Post-translationally, the N-terminus is blocked.

It is found in the cell inner membrane. It carries out the reaction a ubiquinone + n Na(+)(in) + NADH + H(+) = a ubiquinol + n Na(+)(out) + NAD(+). Its activity is regulated as follows. This reaction is tightly coupled to the Na(+) pumping activity and specifically requires Na(+) for activity. Inhibited by korormicin and 2-N-heptyl-4-hydroxyquinoline N-oxide (HQNO). In terms of biological role, NQR complex catalyzes the reduction of ubiquinone-1 to ubiquinol by two successive reactions, coupled with the transport of Na(+) ions from the cytoplasm to the periplasm. NqrA to NqrE are probably involved in the second step, the conversion of ubisemiquinone to ubiquinol. The chain is Na(+)-translocating NADH-quinone reductase subunit E from Vibrio alginolyticus.